The primary structure comprises 187 residues: ATP synthase subunit b (187 aa).

Residues 36-53 (PYQWVSVAMLVLIAIMLW) traverse the membrane as a helical segment.

It belongs to the ATPase B chain family. In terms of assembly, F-type ATPases have 2 components, F(1) - the catalytic core - and F(0) - the membrane proton channel. F(1) has five subunits: alpha(3), beta(3), gamma(1), delta(1), epsilon(1). F(0) has four main subunits: a(1), b(2) and c(10-14). The alpha and beta chains form an alternating ring which encloses part of the gamma chain. F(1) is attached to F(0) by a central stalk formed by the gamma and epsilon chains, while a peripheral stalk is formed by the delta and b chains.

The protein resides in the cell inner membrane. In terms of biological role, f(1)F(0) ATP synthase produces ATP from ADP in the presence of a proton or sodium gradient. F-type ATPases consist of two structural domains, F(1) containing the extramembraneous catalytic core and F(0) containing the membrane proton channel, linked together by a central stalk and a peripheral stalk. During catalysis, ATP synthesis in the catalytic domain of F(1) is coupled via a rotary mechanism of the central stalk subunits to proton translocation. Component of the F(0) channel, it forms part of the peripheral stalk, linking F(1) to F(0). The sequence is that of ATP synthase subunit b from Erythrobacter litoralis (strain HTCC2594).